The chain runs to 527 residues: Gustatory receptor for bitter taste 66a (527 aa).

Topologically, residues 1-46 (MAQAEDAVQPLLQQFQQLFFISKIAGILPQDLEKFRSRNLLEKSRN) are cytoplasmic. Residues 47–67 (GMIYMLSTLILYVVLYNILIY) form a helical membrane-spanning segment. The Extracellular segment spans residues 68-80 (SFGEEDRSLKASQ). The helical transmembrane segment at 81–101 (STLTFVIGLFLTYIGLIMMVS) threads the bilayer. Residues 102–144 (DQLTALRNQGRIGELYERIRLVDERLYKEGCVMDNSTIGRRIR) lie on the Cytoplasmic side of the membrane. Residues 145-165 (IMLIMTVIFELSILVSTYVKL) traverse the membrane as a helical segment. At 166–174 (VDYSQWMSL) the chain is on the extracellular side. Residues 175–195 (LWIVSAIPTFINTLDKIWFAV) traverse the membrane as a helical segment. Residues 196–345 (SLYALKERFE…KALNELWSYP (150 aa)) are Cytoplasmic-facing. The chain crosses the membrane as a helical span at residues 346–366 (ILSLMAYGFLIFTAQLYFLYC). Topologically, residues 367-382 (ATQYQSIPSLFRSAKN) are extracellular. A helical transmembrane segment spans residues 383-403 (PFITVIVLSYTSGKCVYLIYL). Topologically, residues 404-460 (SWKTSQASKRTGISLHKCGVVADDNLLYEIVNHLSLKLLNHSVDFSACGFFTLDMET) are cytoplasmic. A helical transmembrane segment spans residues 461 to 481 (LYGVSGGITSYLIILIQFNLA). At 482–527 (AQQAKEAIQTFNSLNDTAGLVGAATDMDNISSTLRDFVTTTMTPAV) the chain is on the extracellular side. Residues N496 and N510 are each glycosylated (N-linked (GlcNAc...) asparagine).

Belongs to the insect chemoreceptor superfamily. Gustatory receptor (GR) family. Gr66a subfamily. Taste hairs in labial palps, labral and cibarial sense organs and forelegs. In larvae, is expressed in neurons of the terminal external chemosensory organ, as well as in the dorsal, ventral, and posterior pharyngeal sense organs.

The protein localises to the cell membrane. Gustatory receptor required for response to the bitter in taste neurons. Gr66a cells respond to bitter compounds such as caffeine, theophylline, threonine or valine. Flies avoid bitter substances, suggesting that Gr66a neuron activity is sufficient to mediate avoidance behavior. Required for sensing and avoiding N,N-Diethyl-meta-toluamide (DEET), the most widely used insect repellent worldwide, as well as to L-canavanine, a plant-derived insecticide. Gr66a neurons are also involved in the sex-specific perception of molecules inducing male avoidance behavior, probably through sensing 7-tricosene (7-T), a male cuticular pheromone and leading to inhibition of male-male courtship. Finally, also plays a role in oviposition behavior, in which females evaluate their environment and choose to lay eggs on substrates they may find aversive in other contexts. This is Gustatory receptor for bitter taste 66a (Gr66a) from Drosophila melanogaster (Fruit fly).